The following is a 71-amino-acid chain: Small ribosomal subunit protein bS21 (71 aa).

This sequence belongs to the bacterial ribosomal protein bS21 family.

This Shewanella amazonensis (strain ATCC BAA-1098 / SB2B) protein is Small ribosomal subunit protein bS21.